A 475-amino-acid chain; its full sequence is BTB/POZ domain-containing protein 10 (475 aa).

Residues 1–144 (MAGRPHPYDS…SQSSSDGSCK (144 aa)) form a disordered region. The segment covering 22–31 (LHSRPRKLYK) has biased composition (basic residues). The span at 57-80 (GHERSRDRRRSSDRSRDSSHERAE) shows a compositional bias: basic and acidic residues. Positions 81-94 (SQLTPCIRNVTSPT) are enriched in polar residues. Residues 97 to 107 (HHIEREKDHSS) show a composition bias toward basic and acidic residues. Residues 108–144 (SRPSSPRPQRASPNGSMSSAGNSSRNSSQSSSDGSCK) show a composition bias toward low complexity. An interaction with AKT family members region spans residues 146–475 (SGEMVFVYEN…LDPDAQNPML (330 aa)). Residues 167 to 241 (ERVTLIVDNT…YKTGIIRCPD (75 aa)) enclose the BTB domain. Residues 451 to 475 (ELDILPSHPASGNNDLDPDAQNPML) form a disordered region.

As to quaternary structure, interacts (via C-terminal 330-amino-acid region) with AKT1; AKT2 and AKT3. Interacts with PPP2CA and PPP1CA. In terms of tissue distribution, ubiquitously expressed (at protein level).

It is found in the nucleus. The protein resides in the cytoplasm. Functionally, plays a major role as an activator of AKT family members by inhibiting PPP2CA-mediated dephosphorylation, thereby keeping AKTs activated. Plays a role in preventing motor neuronal death and in accelerating the growth of pancreatic beta cells. This Mus musculus (Mouse) protein is BTB/POZ domain-containing protein 10 (Btbd10).